A 259-amino-acid chain; its full sequence is 2-oxoglutaramate amidase (259 aa).

The CN hydrolase domain occupies 3–238 (WTISCLQFDI…EGIVRAEIDL (236 aa)). Glu42 acts as the Proton acceptor in catalysis. Lys111 acts as the Proton donor in catalysis. Cys145 acts as the Nucleophile in catalysis.

It belongs to the carbon-nitrogen hydrolase superfamily. NIT1/NIT2 family.

The enzyme catalyses 2-oxoglutaramate + H2O = 2-oxoglutarate + NH4(+). Its function is as follows. Involved in the methylthioribose (MTR) recycling pathway. Probably catalyzes the conversion of 2-oxoglutaramate to 2-oxoglutarate. In Bacillus subtilis (strain 168), this protein is 2-oxoglutaramate amidase.